Reading from the N-terminus, the 139-residue chain is Acyl carrier protein 4, chloroplastic (139 aa).

The N-terminal 55 residues, 1-55, are a transit peptide targeting the chloroplast; that stretch reads MASAAAGASICIKSASCSPLAPGRISSLRSVSLPVSRKSFPSLRSSKGSFARVSC. Residues 59–134 form the Carrier domain; it reads PETVAKVCRI…DAADLIEKLM (76 aa). O-(pantetheine 4'-phosphoryl)serine is present on Ser94.

The protein belongs to the acyl carrier protein (ACP) family. In terms of processing, 4'-phosphopantetheine is transferred from CoA to a specific serine of apo-ACP by acpS. This modification is essential for activity because fatty acids are bound in thioester linkage to the sulfhydryl of the prosthetic group.

Its subcellular location is the plastid. The protein resides in the chloroplast. The protein operates within lipid metabolism; fatty acid biosynthesis. Its function is as follows. Carrier of the growing fatty acid chain in fatty acid biosynthesis. This Cuphea lanceolata (Cigar flower) protein is Acyl carrier protein 4, chloroplastic (ACL1).